Here is a 304-residue protein sequence, read N- to C-terminus: Non-specific ribonucleoside hydrolase RihC (304 aa).

His-233 is a catalytic residue.

Belongs to the IUNH family. RihC subfamily.

Its function is as follows. Hydrolyzes both purine and pyrimidine ribonucleosides with a broad-substrate specificity. This Shigella boydii serotype 4 (strain Sb227) protein is Non-specific ribonucleoside hydrolase RihC.